The chain runs to 371 residues: Chaperone protein DnaJ (371 aa).

Residues 5 to 70 (CYYEILNVSK…SKRSRYDQFG (66 aa)) form the J domain. Residues 127 to 204 (GVEKEITIPR…CYGNGKVKKQ (78 aa)) form a CR-type zinc finger. Zn(2+) is bound by residues Cys140, Cys143, Cys156, Cys159, Cys178, Cys181, Cys192, and Cys195. CXXCXGXG motif repeat units lie at residues 140 to 147 (CDSCDGTG), 156 to 163 (CHACHGQG), 178 to 185 (CPVCNGTG), and 192 to 199 (CDACYGNG).

This sequence belongs to the DnaJ family. As to quaternary structure, homodimer. Zn(2+) serves as cofactor.

The protein resides in the cytoplasm. Participates actively in the response to hyperosmotic and heat shock by preventing the aggregation of stress-denatured proteins and by disaggregating proteins, also in an autonomous, DnaK-independent fashion. Unfolded proteins bind initially to DnaJ; upon interaction with the DnaJ-bound protein, DnaK hydrolyzes its bound ATP, resulting in the formation of a stable complex. GrpE releases ADP from DnaK; ATP binding to DnaK triggers the release of the substrate protein, thus completing the reaction cycle. Several rounds of ATP-dependent interactions between DnaJ, DnaK and GrpE are required for fully efficient folding. Also involved, together with DnaK and GrpE, in the DNA replication of plasmids through activation of initiation proteins. This is Chaperone protein DnaJ from Francisella tularensis subsp. tularensis (strain WY96-3418).